We begin with the raw amino-acid sequence, 284 residues long: Prolyl 4-hydroxylase subunit alpha (284 aa).

The 116-residue stretch at 169–284 folds into the Fe2OG dioxygenase domain; that stretch reads NFNSIKTQTQ…PRIAITTWIY (116 aa). 3 residues coordinate Fe cation: H191, D193, and H266. R276 contributes to the 2-oxoglutarate binding site.

This sequence belongs to the P4HA family. As to quaternary structure, heterotetramer of two alpha-1 chains and two beta chains (the beta chain is the multi-functional PDI). Requires Fe(2+) as cofactor. The cofactor is L-ascorbate.

It is found in the cytoplasm. The catalysed reaction is L-prolyl-[Skp1 protein] + 2-oxoglutarate + O2 = trans-4-hydroxy-L-prolyl-[Skp1 protein] + succinate + CO2. With respect to regulation, inhibited by the prolyl-hydroxylase inhibitors alpha,alpha'-dipyridyl and ethyl 3,4-dihydroxybenzoate. Its function is as follows. Catalyzes the post-translational formation of 4-hydroxyproline. Probably hydroxylates skp1 on Pro-143. This Dictyostelium discoideum (Social amoeba) protein is Prolyl 4-hydroxylase subunit alpha (phyA).